Reading from the N-terminus, the 76-residue chain is Putative antitoxin VapB2 (76 aa).

This sequence belongs to the UPF0330 family.

Its function is as follows. Possibly the antitoxin component of a type II toxin-antitoxin (TA) system. Its cognate toxin is VapC2 (Potential). In Pyrococcus abyssi (strain GE5 / Orsay), this protein is Putative antitoxin VapB2 (vapB2).